Consider the following 1167-residue polypeptide: Nucleolar protein 8 (1167 aa).

The RRM domain occupies 8–89; sequence KRLYVGGLSQ…GTLQIQLAKE (82 aa). Positions 223-304 are disordered; that stretch reads VQKDESSTGS…NSISDDDTDS (82 aa). Residue Lys-225 forms a Glycyl lysine isopeptide (Lys-Gly) (interchain with G-Cter in SUMO2) linkage. A compositionally biased stretch (polar residues) spans 248-275; that stretch reads LTQQQAAQKRTCDSITPSKSSPVPVSDT. Phosphoserine is present on residues Ser-268 and Ser-298. The residue at position 302 (Thr-302) is a Phosphothreonine. Residue Ser-304 is modified to Phosphoserine. A Glycyl lysine isopeptide (Lys-Gly) (interchain with G-Cter in SUMO2) cross-link involves residue Lys-314. Residues Ser-331 and Ser-365 each carry the phosphoserine modification. Tyr-376 carries the post-translational modification Phosphotyrosine. The residue at position 378 (Ser-378) is a Phosphoserine. At Thr-381 the chain carries Phosphothreonine. Residue Ser-432 is modified to Phosphoserine. 5 disordered regions span residues 435–470, 499–533, 590–908, 932–982, and 1006–1026; these read ESAL…DSEG, LKVP…TGLR, KDSV…EEEL, NRGS…AEKL, and YTSE…EKPE. A compositionally biased stretch (acidic residues) spans 457 to 470; sequence EDADSASELADSEG. Residues 501–510 show a composition bias toward basic and acidic residues; sequence VPNEDTKSDG. The segment covering 640–652 has biased composition (polar residues); the sequence is NYIQPQKRQTTFE. A compositionally biased stretch (basic and acidic residues) spans 653-668; sequence SQDRKAVSPSSSEKRS. Ser-723 is subject to Phosphoserine. A compositionally biased stretch (basic and acidic residues) spans 727-736; that stretch reads SSKDTREIKT. Positions 738–748 are enriched in polar residues; that stretch reads FSLSISNSSDV. The span at 749–776 shows a compositional bias: basic and acidic residues; it reads SAKDKHAEDNEKRLAALEARQKAKEVQK. Residues 753–779 are a coiled coil; sequence KHAEDNEKRLAALEARQKAKEVQKKLV. Phosphothreonine is present on Thr-795. The residue at position 801 (Ser-801) is a Phosphoserine. The span at 817–827 shows a compositional bias: basic and acidic residues; it reads HPGEEWVKESM. 4 positions are modified to phosphoserine: Ser-837, Ser-838, Ser-843, and Ser-845. Over residues 837-847 the composition is skewed to acidic residues; that stretch reads SSDDDESDSED. Over residues 874–887 the composition is skewed to basic and acidic residues; that stretch reads GTDDRFRMDSRFLE. The stretch at 886 to 924 forms a coiled coil; that stretch reads LETDSEEEQEEVNEKKTAEEEELAEEKKKALNVVQSVLQ. Thr-888 is modified (phosphothreonine). Ser-890 carries the phosphoserine modification. Basic and acidic residues-rich tracts occupy residues 940–968 and 1007–1026; these read KFKD…PKES and TSEK…EKPE. Ser-1036 is modified (phosphoserine). A Glycyl lysine isopeptide (Lys-Gly) (interchain with G-Cter in SUMO2) cross-link involves residue Lys-1057. Disordered regions lie at residues 1071–1105 and 1145–1167; these read IVWQ…EASL and RTTN…MKPK. A phosphoserine mark is found at Ser-1082, Ser-1083, Ser-1084, and Ser-1099. A compositionally biased stretch (basic residues) spans 1153–1167; the sequence is CRKKHKDAKRKMKPK.

Interacts with the GTP form of RRAGA, RRAGC and RRAGD. Interacts with NIP7. Interacts with DDX18; the interaction is RNA-dependent. Interacts with DDX47; the interaction is RNA-dependent. In terms of processing, phosphorylated. As to expression, expressed in various diffuse-type gastric cancers. Detected at lower levels in skeletal muscle.

Its subcellular location is the nucleus. The protein localises to the nucleolus. Functionally, plays an essential role in the survival of diffuse-type gastric cancer cells. Acts as a nucleolar anchoring protein for DDX47. May be involved in regulation of gene expression at the post-transcriptional level or in ribosome biogenesis in cancer cells. This Homo sapiens (Human) protein is Nucleolar protein 8.